The sequence spans 141 residues: Nucleoside diphosphate kinase (141 aa).

Residues K11, F59, R87, T93, R104, and N114 each contribute to the ATP site. H117 functions as the Pros-phosphohistidine intermediate in the catalytic mechanism.

It belongs to the NDK family. As to quaternary structure, homotetramer. Mg(2+) serves as cofactor.

The protein localises to the cytoplasm. It catalyses the reaction a 2'-deoxyribonucleoside 5'-diphosphate + ATP = a 2'-deoxyribonucleoside 5'-triphosphate + ADP. The catalysed reaction is a ribonucleoside 5'-diphosphate + ATP = a ribonucleoside 5'-triphosphate + ADP. Functionally, major role in the synthesis of nucleoside triphosphates other than ATP. The ATP gamma phosphate is transferred to the NDP beta phosphate via a ping-pong mechanism, using a phosphorylated active-site intermediate. This chain is Nucleoside diphosphate kinase, found in Xanthomonas axonopodis pv. citri (strain 306).